Reading from the N-terminus, the 89-residue chain is Small ribosomal subunit protein bS20 (89 aa).

The segment at 68–89 (PNKGARKSSRLDHFVNEQKSKQ) is disordered. Positions 76–89 (SRLDHFVNEQKSKQ) are enriched in basic and acidic residues.

Belongs to the bacterial ribosomal protein bS20 family.

In terms of biological role, binds directly to 16S ribosomal RNA. The sequence is that of Small ribosomal subunit protein bS20 from Mycoplasmopsis agalactiae (strain NCTC 10123 / CIP 59.7 / PG2) (Mycoplasma agalactiae).